We begin with the raw amino-acid sequence, 412 residues long: Glucose-1-phosphate adenylyltransferase (412 aa).

Alpha-D-glucose 1-phosphate is bound by residues Gly-169, 184 to 185, and Ser-201; that span reads EK.

This sequence belongs to the bacterial/plant glucose-1-phosphate adenylyltransferase family. As to quaternary structure, homotetramer.

The catalysed reaction is alpha-D-glucose 1-phosphate + ATP + H(+) = ADP-alpha-D-glucose + diphosphate. It participates in glycan biosynthesis; glycogen biosynthesis. Its function is as follows. Involved in the biosynthesis of ADP-glucose, a building block required for the elongation reactions to produce glycogen. Catalyzes the reaction between ATP and alpha-D-glucose 1-phosphate (G1P) to produce pyrophosphate and ADP-Glc. The polypeptide is Glucose-1-phosphate adenylyltransferase (Geobacter metallireducens (strain ATCC 53774 / DSM 7210 / GS-15)).